Here is a 442-residue protein sequence, read N- to C-terminus: uncharacterized protein (442 aa).

Residues 211 to 269 (LDYSTDKPEDSESEDIELEDSESEDSESEDIDQHGGQGPDDDEFNANFDDPQFDEFDFG) are disordered. A compositionally biased stretch (acidic residues) spans 221 to 240 (SESEDIELEDSESEDSESED).

It is found in the virion. This is an uncharacterized protein from Acanthamoeba polyphaga (Amoeba).